The primary structure comprises 340 residues: Arginase 1, mitochondrial (340 aa).

A mitochondrion-targeting transit peptide spans Met-1–Thr-24. 4 residues coordinate Mn(2+): His-159, Asp-183, His-185, and Asp-187. Substrate-binding positions include His-185–Tyr-189 and Glu-193–Asn-195. Positions 268 and 270 each coordinate Mn(2+). Glu-311 provides a ligand contact to substrate.

It belongs to the arginase family. The cofactor is Mn(2+).

The protein localises to the mitochondrion. The catalysed reaction is L-arginine + H2O = urea + L-ornithine. It participates in nitrogen metabolism; urea cycle; L-ornithine and urea from L-arginine: step 1/1. Functionally, catalyzes the hydrolysis of L-arginine to urea and L-ornithine. The latter can be utilized in the urea cycle or as a precursor for the synthesis of both polyamines and proline. This Oryza sativa subsp. indica (Rice) protein is Arginase 1, mitochondrial.